Here is a 361-residue protein sequence, read N- to C-terminus: WAT1-related protein At4g01450 (361 aa).

The next 10 helical transmembrane spans lie at 8–28 (WAPM…NALV), 40–60 (VIAT…AYFW), 76–96 (LFVS…LGLS), 103–123 (GSAF…IFGF), 132–152 (IGYG…LLTM), 177–197 (WIKG…WMLI), 209–229 (YSST…LSLI), 243–263 (LTII…TVGM), 273–293 (VVSS…DFLI), and 298–318 (IYLG…IFLW). 2 EamA domains span residues 21-142 (AGMV…GTLI) and 194-317 (WMLI…YIFL).

This sequence belongs to the drug/metabolite transporter (DMT) superfamily. Plant drug/metabolite exporter (P-DME) (TC 2.A.7.4) family.

Its subcellular location is the membrane. The protein is WAT1-related protein At4g01450 of Arabidopsis thaliana (Mouse-ear cress).